Here is a 454-residue protein sequence, read N- to C-terminus: NADP-specific glutamate dehydrogenase (454 aa).

Ser-2 bears the N-acetylserine mark. Lys-114 is an active-site residue.

It belongs to the Glu/Leu/Phe/Val dehydrogenases family. In terms of assembly, homohexamer.

The catalysed reaction is L-glutamate + NADP(+) + H2O = 2-oxoglutarate + NH4(+) + NADPH + H(+). This chain is NADP-specific glutamate dehydrogenase (gdh), found in Neurospora crassa (strain ATCC 24698 / 74-OR23-1A / CBS 708.71 / DSM 1257 / FGSC 987).